The primary structure comprises 845 residues: Proto-oncogene vav (845 aa).

Positions 1–119 constitute a Calponin-homology (CH) domain; it reads MELWRQCTHW…YTLSALSWTP (119 aa). The DH domain occupies 194 to 373; it reads KRCCCLREIQ…RDLAQCVNEV (180 aa). A PH domain is found at 402-504; the sequence is RPKIDGELKI…WMEQFEMAIS (103 aa). The Phorbol-ester/DAG-type zinc finger occupies 515-564; the sequence is GHDFQMFSFEETTSCKACQMLLRGTFYQGYRCYRCRAPAHKECLGRVPPC. The SH3 1 domain maps to 592–660; sequence LGLPKMEVFQ…PCNRVHPYVH (69 aa). Residues 671–765 form the SH2 domain; that stretch reads WYAGPMERAG…SLDTTLQFPY (95 aa). In terms of domain architecture, SH3 2 spans 782-842; it reads KYFGTAKARY…PSNYVEEDYS (61 aa). Phosphotyrosine is present on residues Tyr-826 and Tyr-844.

Interacts with SHB. Interacts with APS, DOCK2, GRB2, GRB3, DOCK2, SLA, TEC and ZNF655/VIK. Interacts with SIAH2; without leading to its degradation. Associates with BLNK, PLCG1, GRB2 and NCK1 in a B-cell antigen receptor-dependent fashion. Interacts with CBLB; which inhibits tyrosine phosphorylation and down-regulates activity. May interact with CCPG1. Interacts with CLNK. Interacts with THEMIS2. Interacts with NEK3 and this interaction is prolactin-dependent. Interacts with ITK. Interacts with PTK2B/PYK2. Interacts with HCK. Interacts with PTK2B/PYK2. Interacts (via SH2 domain) with SYK. Interacts with ANKRD54. Interacts with CD6. Interacts with isoform 2 of CRACR2A. Interacts with LCP2; this interaction plays a role in TCR-mediated cytokine production. Post-translationally, phosphorylated by FYN. Phosphorylated on tyrosine residues by HCK in response to IFNG and bacterial lipopolysaccharide (LPS). In terms of tissue distribution, widely expressed in hematopoietic cells but not in other cell types. Found in the spleen and lung.

Functionally, couples tyrosine kinase signals with the activation of the Rho/Rac GTPases, thus leading to cell differentiation and/or proliferation. The polypeptide is Proto-oncogene vav (Vav1) (Mus musculus (Mouse)).